A 245-amino-acid chain; its full sequence is Pathogenesis-related thaumatin-like protein 3.6 (245 aa).

The N-terminal stretch at 1–19 is a signal peptide; the sequence is GSIPFWIALIASFSVFLQG. 8 disulfide bridges follow: C33-C226, C74-C84, C89-C95, C142-C215, C148-C198, C156-C166, C170-C179, and C180-C185. N-linked (GlcNAc...) asparagine glycosylation occurs at N90. N-linked (GlcNAc...) asparagine glycosylation occurs at N186.

This sequence belongs to the thaumatin family. As to expression, mostly expressed in strobili, and, to a lower extent, in roots of seedlings and saplings.

Its function is as follows. May be involved in disease resistance. This chain is Pathogenesis-related thaumatin-like protein 3.6, found in Cryptomeria japonica (Japanese cedar).